A 322-amino-acid chain; its full sequence is Ferredoxin--NADP reductase (322 aa).

Positions 34, 42, 47, 87, 120, 279, and 320 each coordinate FAD.

This sequence belongs to the ferredoxin--NADP reductase type 2 family. As to quaternary structure, homodimer. The cofactor is FAD.

The catalysed reaction is 2 reduced [2Fe-2S]-[ferredoxin] + NADP(+) + H(+) = 2 oxidized [2Fe-2S]-[ferredoxin] + NADPH. This is Ferredoxin--NADP reductase from Streptococcus pneumoniae (strain Hungary19A-6).